The primary structure comprises 447 residues: Serine/threonine-protein phosphatase 2A 55 kDa regulatory subunit B gamma isoform (447 aa).

WD repeat units lie at residues 22-61 (TEADVISTVEFNHTGELLATGDKGGRVVIFQREPESKNAP), 87-128 (EIEE…KRPE), 171-209 (GHTYHINSISVNSDCETYMSADDLRINLWHLAITDRSFN), 220-260 (DLTE…LCDK), 279-317 (EIISSVSDVKFSHSGRYMLTRDYLTVKVWDLNMEARPIE), 334-375 (ESDC…DVTL), and 410-446 (DFTKKILHTAWHPAENIIAIAATNNLYIFQDKVNSDM).

Belongs to the phosphatase 2A regulatory subunit B family. As to quaternary structure, PP2A consists of a common heterodimeric core enzyme, composed of a 36 kDa catalytic subunit (subunit C) and a 65 kDa constant regulatory subunit (PR65 or subunit A), that associates with a variety of regulatory subunits. Proteins that associate with the core dimer include three families of regulatory subunits B (the R2/B/PR55/B55, R3/B''/PR72/PR130/PR59 and R5/B'/B56 families), the 48 kDa variable regulatory subunit, viral proteins, and cell signaling molecules. Interacts with IER5. Highly expressed in brain.

In terms of biological role, the B regulatory subunit might modulate substrate selectivity and catalytic activity, and might also direct the localization of the catalytic enzyme to a particular subcellular compartment. This chain is Serine/threonine-protein phosphatase 2A 55 kDa regulatory subunit B gamma isoform (Ppp2r2c), found in Rattus norvegicus (Rat).